A 367-amino-acid chain; its full sequence is tRNA-specific 2-thiouridylase MnmA (367 aa).

ATP is bound by residues 12–19 (GMSGGVDS) and M38. The tract at residues 98–100 (NPD) is interaction with target base in tRNA. Catalysis depends on C103, which acts as the Nucleophile. A disulfide bond links C103 and C200. G128 provides a ligand contact to ATP. Residues 150 to 152 (KDQ) are interaction with tRNA. The active-site Cysteine persulfide intermediate is C200. The interaction with tRNA stretch occupies residues 312 to 313 (RY).

Belongs to the MnmA/TRMU family. In terms of assembly, interacts with TusE.

The protein resides in the cytoplasm. It carries out the reaction S-sulfanyl-L-cysteinyl-[protein] + uridine(34) in tRNA + AH2 + ATP = 2-thiouridine(34) in tRNA + L-cysteinyl-[protein] + A + AMP + diphosphate + H(+). Catalyzes the 2-thiolation of uridine at the wobble position (U34) of tRNA(Lys), tRNA(Glu) and tRNA(Gln), leading to the formation of s(2)U34, the first step of tRNA-mnm(5)s(2)U34 synthesis. Sulfur is provided by IscS, via a sulfur-relay system. Binds ATP and its substrate tRNAs. This chain is tRNA-specific 2-thiouridylase MnmA, found in Blochmanniella pennsylvanica (strain BPEN).